A 156-amino-acid polypeptide reads, in one-letter code: Small ribosomal subunit protein uS7c (156 aa).

Belongs to the universal ribosomal protein uS7 family. Part of the 30S ribosomal subunit.

Its subcellular location is the plastid. It is found in the chloroplast. Its function is as follows. One of the primary rRNA binding proteins, it binds directly to 16S rRNA where it nucleates assembly of the head domain of the 30S subunit. This chain is Small ribosomal subunit protein uS7c (rps7), found in Euglena gracilis.